Consider the following 1414-residue polypeptide: DNA-directed RNA polymerase subunit beta' (1414 aa).

Positions 72, 74, 87, and 90 each coordinate Zn(2+). Positions 463, 465, and 467 each coordinate Mg(2+). Positions 811, 885, 892, and 895 each coordinate Zn(2+).

The protein belongs to the RNA polymerase beta' chain family. As to quaternary structure, the RNAP catalytic core consists of 2 alpha, 1 beta, 1 beta' and 1 omega subunit. When a sigma factor is associated with the core the holoenzyme is formed, which can initiate transcription. Requires Mg(2+) as cofactor. Zn(2+) serves as cofactor.

It carries out the reaction RNA(n) + a ribonucleoside 5'-triphosphate = RNA(n+1) + diphosphate. Functionally, DNA-dependent RNA polymerase catalyzes the transcription of DNA into RNA using the four ribonucleoside triphosphates as substrates. This Roseobacter denitrificans (strain ATCC 33942 / OCh 114) (Erythrobacter sp. (strain OCh 114)) protein is DNA-directed RNA polymerase subunit beta'.